We begin with the raw amino-acid sequence, 136 residues long: ATP synthase epsilon chain (136 aa).

The interval 104-136 is disordered; sequence AGMEGQPASPEKVKAQQQLNEARARMQASKSAD.

It belongs to the ATPase epsilon chain family. As to quaternary structure, F-type ATPases have 2 components, CF(1) - the catalytic core - and CF(0) - the membrane proton channel. CF(1) has five subunits: alpha(3), beta(3), gamma(1), delta(1), epsilon(1). CF(0) has three main subunits: a, b and c.

It is found in the cellular thylakoid membrane. Produces ATP from ADP in the presence of a proton gradient across the membrane. In Synechococcus sp. (strain CC9902), this protein is ATP synthase epsilon chain.